A 456-amino-acid polypeptide reads, in one-letter code: Keratin, type I cuticular Ha8 (456 aa).

Positions 1-104 (MTSSYSSSSC…YGENTLNGHE (104 aa)) are head. The IF rod domain maps to 104–415 (EKETMQFLND…NLLESEDCKL (312 aa)). The segment at 105 to 139 (KETMQFLNDRLANYLEKVRQLEQENAELEATLLER) is coil 1A. A linker 1 region spans residues 140–150 (SKCHESTVCPD). A coil 1B region spans residues 151–251 (YQSYFHTIEE…HEQEVKILRS (101 aa)). Residues 252 to 267 (QLGEKLRIELDIEPTI) form a linker 12 region. Residues 268-411 (DLNRVLGEMR…ATYRNLLESE (144 aa)) are coil 2. The segment at 412-456 (DCKLPCNPCSTSPSCVTAPCAPRPSCGPCTTCGPTCGASTTGSRF) is tail.

This sequence belongs to the intermediate filament family.

In Homo sapiens (Human), this protein is Keratin, type I cuticular Ha8 (KRT38).